A 4065-amino-acid chain; its full sequence is Polyketide synthase-nonribosomal peptide synthetase pyiS (4065 aa).

The Ketosynthase family 3 (KS3) domain occupies 6–440 (SEPVAIIGTG…GANCHAILEA (435 aa)). Catalysis depends on for beta-ketoacyl synthase activity residues cysteine 179, histidine 314, and histidine 360. The interval 552-875 (IFTGQGAQWP…PYTGVLSRGK (324 aa)) is acyl transferase. The tract at residues 950-1087 (NELLGRQILD…CDVLVTYGDS (138 aa)) is N-terminal hotdog fold. Positions 950 to 1260 (NELLGRQILD…TQPLFNPTEA (311 aa)) constitute a PKS/mFAS DH domain. The interval 951-1254 (ELLGRQILDG…QVEGLQTQPL (304 aa)) is dehydratase (DH) domain. Histidine 982 functions as the Proton acceptor; for dehydratase activity in the catalytic mechanism. The interval 1102–1260 (EYFMLGVESD…TQPLFNPTEA (159 aa)) is C-terminal hotdog fold. Aspartate 1166 functions as the Proton donor; for dehydratase activity in the catalytic mechanism. Residues 1409–1593 (AHGMPRYTKY…KQTGFSGIDT (185 aa)) are methyltransferase (MT) domain. The interval 2129–2302 (TYWLVGLSGT…NASVVHIGAI (174 aa)) is ketoreductase (KR)domain. One can recognise a Carrier 1 domain in the interval 2411–2492 (INSAEVYEII…EILETAQQLL (82 aa)). At serine 2452 the chain carries O-(pantetheine 4'-phosphoryl)serine. The interval 2497–2561 (LPKMDPNDKS…GAKKGETVSK (65 aa)) is disordered. A compositionally biased stretch (basic and acidic residues) spans 2551 to 2561 (SGAKKGETVSK). Residues 2645 to 3076 (SKKTPISFAQ…FSRNQALRLA (432 aa)) are condensation. The interval 3112-3516 (DIAKQKSHSL…RLLLEGRIAD (405 aa)) is adenylation. One can recognise a Carrier 2 domain in the interval 3634–3714 (QDLNDTESRL…DMAALVDELS (81 aa)). An O-(pantetheine 4'-phosphoryl)serine modification is found at serine 3674. The interval 3760–3975 (LTGSTGFLGR…LDFISVDEAA (216 aa)) is reductase-like.

This sequence belongs to the NRP synthetase family.

Its pathway is mycotoxin biosynthesis. In terms of biological role, hybrid PKS-NRPS synthetase; part of the gene cluster that mediates the biosynthesis of the mycotoxin pyrichalasin H, a tyrosine-derived cytochalasan that inhibits the growth of rice seedlings, but also inhibits lymphocyte capping and actin polymerization and alters cell morphology. Pyrichalasin H is indicated as the responsible agent for the genus-specific pathogenicity of M.grisea toward crabgrass. The first step in the pathway is catalyzed by the O-methyltransferase pyiA which methylates free tyrosine to generate the precursor O-methyltyrosine. The hybrid PKS-NRPS pyiS, assisted by the enoyl reductase pyiC, are responsible for fusion of the O-methyltyrosine precursor and the polyketide backbone. The polyketide synthase module (PKS) of pyiS is responsible for the synthesis of the polyketide backbone and the downstream nonribosomal peptide synthetase (NRPS) amidates the carboxyl end of the polyketide with the O-methyltyrosine precursor. As the NRPS A-domain demonstrates substrate tolerance, pyiS can also use phenylalanine, tyrosine and even para-chlorophenylalanine as amino acid precursor, which leads to the production of novel cytochalasans, including halogenated cytochalasans. Because pyiS lacks a designated enoylreductase (ER) domain, the required activity is provided the enoyl reductase pyiC. Reduction by the hydrolyase pyiE leads to 1,5-dihydropyrrolone, which is substrate for dehydration and intra-molecular Diels-Alder cyclization by the Diels-Alderase pyiF to yield the required isoindolone-fused macrocycle. The tailoring cytochrome P450 monooxygenases piyD and piyG catalyze the hydroxylation at C-18 and C-7, respectivily, whereas the short-chain dehydrogenase/reductase pyiH reduces the carbonyl at C-21 in preparation for the transfer of an acetyl group by the acetyltransferase pyiB. These 3 reactions whose order is not clear yet, lead to the production of O-methylpyrichalasin J, a deacetylated pyrichalasin H. Finally, pyiB to converts O-methylpyrichalasin J into the final product pyrichalasin H via acetylation of C-21. The chain is Polyketide synthase-nonribosomal peptide synthetase pyiS from Pyricularia grisea (Crabgrass-specific blast fungus).